A 298-amino-acid chain; its full sequence is tRNA pseudouridine synthase B (298 aa).

The active-site Nucleophile is Asp46.

The protein belongs to the pseudouridine synthase TruB family. Type 1 subfamily.

It carries out the reaction uridine(55) in tRNA = pseudouridine(55) in tRNA. Functionally, responsible for synthesis of pseudouridine from uracil-55 in the psi GC loop of transfer RNAs. This is tRNA pseudouridine synthase B from Paracoccus denitrificans (strain Pd 1222).